We begin with the raw amino-acid sequence, 59 residues long: Cecropin-C (59 aa).

The signal sequence occupies residues 1-23; sequence MNFKLIFLVALVLMAAFLGQTEG. At Val-58 the chain carries Valine amide.

It belongs to the cecropin family.

The protein localises to the secreted. Functionally, cecropins have lytic and antibacterial activity against several Gram-positive and Gram-negative bacteria. The chain is Cecropin-C (CecC) from Anopheles gambiae (African malaria mosquito).